The sequence spans 68 residues: MAKKTTEAKKTVTVEQIGSPIRRPAIQRQTLVGLGLNKMHRQRTLEDTPAVRGMIRAVQHLVRVVDEK.

Belongs to the universal ribosomal protein uL30 family. As to quaternary structure, part of the 50S ribosomal subunit.

The protein is Large ribosomal subunit protein uL30 of Agrobacterium fabrum (strain C58 / ATCC 33970) (Agrobacterium tumefaciens (strain C58)).